The following is a 352-amino-acid chain: Protein RecA (352 aa).

Residue 65–72 (GPESSGKT) participates in ATP binding.

It belongs to the RecA family.

The protein localises to the cytoplasm. In terms of biological role, can catalyze the hydrolysis of ATP in the presence of single-stranded DNA, the ATP-dependent uptake of single-stranded DNA by duplex DNA, and the ATP-dependent hybridization of homologous single-stranded DNAs. It interacts with LexA causing its activation and leading to its autocatalytic cleavage. Plays a functional role in the DNA rearrangement associated with the phenotypic switching from a pathogenic smooth to a nonpathogenic rough form in this bacterium. This Pseudomonas tolaasii protein is Protein RecA.